The primary structure comprises 122 residues: Small ribosomal subunit protein uS13 (122 aa).

Positions 98–122 (VRGQRTHTNARTRKGPAKAIAGKKK) are disordered.

The protein belongs to the universal ribosomal protein uS13 family. Part of the 30S ribosomal subunit. Forms a loose heterodimer with protein S19. Forms two bridges to the 50S subunit in the 70S ribosome.

Functionally, located at the top of the head of the 30S subunit, it contacts several helices of the 16S rRNA. In the 70S ribosome it contacts the 23S rRNA (bridge B1a) and protein L5 of the 50S subunit (bridge B1b), connecting the 2 subunits; these bridges are implicated in subunit movement. Contacts the tRNAs in the A and P-sites. The sequence is that of Small ribosomal subunit protein uS13 from Ruegeria sp. (strain TM1040) (Silicibacter sp.).